Reading from the N-terminus, the 635-residue chain is tRNA uridine 5-carboxymethylaminomethyl modification enzyme MnmG (635 aa).

19–24 (GAGHAG) serves as a coordination point for FAD. 280–294 (GPRYCPSIEDKIVRF) serves as a coordination point for NAD(+).

The protein belongs to the MnmG family. As to quaternary structure, homodimer. Heterotetramer of two MnmE and two MnmG subunits. FAD serves as cofactor.

It localises to the cytoplasm. NAD-binding protein involved in the addition of a carboxymethylaminomethyl (cmnm) group at the wobble position (U34) of certain tRNAs, forming tRNA-cmnm(5)s(2)U34. This is tRNA uridine 5-carboxymethylaminomethyl modification enzyme MnmG from Synechocystis sp. (strain ATCC 27184 / PCC 6803 / Kazusa).